Consider the following 213-residue polypeptide: Charged multivesicular body protein 2b (213 aa).

At alanine 2 the chain carries N-acetylalanine. Residues 25–55 (QRAIIRDRAALEKQEKQLELEIKKMAKIGNK) are a coiled coil. Low complexity predominate over residues 179-194 (AKAPSAARSLPSASTS). The tract at residues 179–199 (AKAPSAARSLPSASTSKATIS) is disordered. Serine 199 carries the phosphoserine modification. The MIT-interacting motif motif lies at 201-211 (EEIERQLKALG).

Belongs to the SNF7 family. In terms of assembly, probable core component of the endosomal sorting required for transport complex III (ESCRT-III). ESCRT-III components are thought to multimerize to form a flat lattice on the perimeter membrane of the endosome. Several assembly forms of ESCRT-III may exist that interact and act sequentially. Interacts with CHMP2A. Interacts with VPS4A. Interacts with VPS4B; the interaction is direct. In brain, it is expressed in all neuronal populations with a relatively enhanced expression in the hippocampus, frontal and temporal lobes and in both granule and Purkinje cells of the cerebellum. Not expressed in astrocytes or oligodendrocytes.

The protein localises to the cytoplasm. It localises to the cytosol. It is found in the late endosome membrane. Probable core component of the endosomal sorting required for transport complex III (ESCRT-III) which is involved in multivesicular bodies (MVBs) formation and sorting of endosomal cargo proteins into MVBs. MVBs contain intraluminal vesicles (ILVs) that are generated by invagination and scission from the limiting membrane of the endosome and mostly are delivered to lysosomes enabling degradation of membrane proteins, such as stimulated growth factor receptors, lysosomal enzymes and lipids. The MVB pathway appears to require the sequential function of ESCRT-O, -I,-II and -III complexes. ESCRT-III proteins mostly dissociate from the invaginating membrane before the ILV is released. The ESCRT machinery also functions in topologically equivalent membrane fission events, such as the terminal stages of cytokinesis. ESCRT-III proteins are believed to mediate the necessary vesicle extrusion and/or membrane fission activities, possibly in conjunction with the AAA ATPase VPS4. The chain is Charged multivesicular body protein 2b (Chmp2b) from Mus musculus (Mouse).